The sequence spans 210 residues: Probable membrane protein Rv1733c (210 aa).

2 consecutive transmembrane segments (helical) span residues 43 to 63 (AVVM…AAAA) and 165 to 185 (ALAA…LLAL).

The protein localises to the cell membrane. The sequence is that of Probable membrane protein Rv1733c from Mycobacterium tuberculosis (strain ATCC 25618 / H37Rv).